A 465-amino-acid chain; its full sequence is Cysteine--tRNA ligase (465 aa).

A Zn(2+)-binding site is contributed by Cys-27. Positions 29–39 match the 'HIGH' region motif; that stretch reads PTVYNFFHIGN. Residues Cys-207, His-232, and Glu-236 each coordinate Zn(2+). A 'KMSKS' region motif is present at residues 264 to 268; sequence KMSKS. Lys-267 contacts ATP.

The protein belongs to the class-I aminoacyl-tRNA synthetase family. Monomer. The cofactor is Zn(2+).

The protein resides in the cytoplasm. The catalysed reaction is tRNA(Cys) + L-cysteine + ATP = L-cysteinyl-tRNA(Cys) + AMP + diphosphate. This chain is Cysteine--tRNA ligase, found in Clostridium botulinum (strain Kyoto / Type A2).